The primary structure comprises 226 residues: Probable proteasome subunit beta type-1 (226 aa).

Positions 1-24 (MATTVKDTMNVDINAIKKGEIRMG) are cleaved as a propeptide — removed in mature form. The Nucleophile role is filled by threonine 25.

Belongs to the peptidase T1B family. The 26S proteasome consists of a 20S proteasome core and two 19S regulatory subunits. The 20S proteasome core is composed of 28 subunits that are arranged in four stacked rings, resulting in a barrel-shaped structure. The two end rings are each formed by seven alpha subunits, and the two central rings are each formed by seven beta subunits. The catalytic chamber with the active sites is on the inside of the barrel.

It is found in the cytoplasm. It localises to the nucleus. The catalysed reaction is Cleavage of peptide bonds with very broad specificity.. In terms of biological role, the proteasome is a multicatalytic proteinase complex which is characterized by its ability to cleave peptides with Arg, Phe, Tyr, Leu, and Glu adjacent to the leaving group at neutral or slightly basic pH. The proteasome has an ATP-dependent proteolytic activity. The sequence is that of Probable proteasome subunit beta type-1 (pre3) from Schizosaccharomyces pombe (strain 972 / ATCC 24843) (Fission yeast).